Reading from the N-terminus, the 236-residue chain is Cysteine-rich venom protein TRI1 (236 aa).

Positions 1–18 (MIVFILLSLAAVLEQSFG) are cleaved as a signal peptide. Residues 37–165 (VDRHNSFRRS…GYSYFYVCQY (129 aa)) form the SCP domain. Disulfide bonds link Cys74-Cys152, Cys91-Cys166, Cys147-Cys163, Cys185-Cys192, Cys188-Cys197, Cys201-Cys234, Cys210-Cys228, and Cys219-Cys232. A ShKT domain is found at 201–234 (CLREDKFTNCKSLVQQNSCQHDWTRKNCPATCFC).

This sequence belongs to the CRISP family. Expressed by the venom gland.

The protein localises to the secreted. Functionally, blocks contraction of smooth muscle elicited by high potassium-induced depolarization, but does not block caffeine-stimulated contraction. May target voltage-gated calcium channels on smooth muscle. The protein is Cysteine-rich venom protein TRI1 of Trimorphodon biscutatus (Western lyre snake).